The primary structure comprises 340 residues: Anthranilate phosphoribosyltransferase (340 aa).

5-phospho-alpha-D-ribose 1-diphosphate-binding positions include Gly81, 84-85, Thr89, 91-94, 109-117, and Ser121; these read GD, NIST, and KHGNRGATS. Gly81 contributes to the anthranilate binding site. Ser93 is a binding site for Mg(2+). Asn112 is an anthranilate binding site. Residue Arg167 coordinates anthranilate. 2 residues coordinate Mg(2+): Asp225 and Glu226.

This sequence belongs to the anthranilate phosphoribosyltransferase family. As to quaternary structure, homodimer. Mg(2+) serves as cofactor.

The enzyme catalyses N-(5-phospho-beta-D-ribosyl)anthranilate + diphosphate = 5-phospho-alpha-D-ribose 1-diphosphate + anthranilate. Its pathway is amino-acid biosynthesis; L-tryptophan biosynthesis; L-tryptophan from chorismate: step 2/5. Catalyzes the transfer of the phosphoribosyl group of 5-phosphorylribose-1-pyrophosphate (PRPP) to anthranilate to yield N-(5'-phosphoribosyl)-anthranilate (PRA). This is Anthranilate phosphoribosyltransferase from Methanocorpusculum labreanum (strain ATCC 43576 / DSM 4855 / Z).